A 655-amino-acid polypeptide reads, in one-letter code: Alpha-amylase (655 aa).

The Nucleophile role is filled by E123. D214 acts as the Proton donor in catalysis.

This sequence belongs to the glycosyl hydrolase 57 family.

The catalysed reaction is Endohydrolysis of (1-&gt;4)-alpha-D-glucosidic linkages in polysaccharides containing three or more (1-&gt;4)-alpha-linked D-glucose units.. The sequence is that of Alpha-amylase (amyA) from Pyrococcus abyssi (strain GE5 / Orsay).